The following is a 163-amino-acid chain: Type-2 ice-structuring protein (163 aa).

The first 17 residues, 1 to 17, serve as a signal peptide directing secretion; sequence MLTVSLLVCAMMALTQA. The propeptide occupies 18–34; that stretch reads NDDKILKGTATEAGPVS. Residues 39-163 form the C-type lectin domain; the sequence is PNCPAGWQPL…SHKSVCAMTF (125 aa). 5 disulfide bridges follow: cysteine 41–cysteine 52, cysteine 69–cysteine 159, cysteine 103–cysteine 134, cysteine 123–cysteine 145, and cysteine 135–cysteine 151.

In terms of processing, the N-terminus is blocked.

It is found in the secreted. Its function is as follows. Antifreeze proteins lower the blood freezing point. The polypeptide is Type-2 ice-structuring protein (Hemitripterus americanus (Sea raven)).